Here is a 176-residue protein sequence, read N- to C-terminus: Large ribosomal subunit protein eL20 (176 aa).

This sequence belongs to the eukaryotic ribosomal protein eL20 family. Component of the large ribosomal subunit.

Its subcellular location is the cytoplasm. Its function is as follows. Component of the large ribosomal subunit. The ribosome is a large ribonucleoprotein complex responsible for the synthesis of proteins in the cell. This is Large ribosomal subunit protein eL20 (rpl18a) from Salmo salar (Atlantic salmon).